A 199-amino-acid polypeptide reads, in one-letter code: UPF0637 protein YsbB (199 aa).

The protein belongs to the UPF0637 family.

In Lactococcus lactis subsp. lactis (strain IL1403) (Streptococcus lactis), this protein is UPF0637 protein YsbB (ysbB).